The chain runs to 394 residues: Protein-glutamate methylesterase/protein-glutamine glutaminase 2 (394 aa).

The Response regulatory domain occupies 4-121; the sequence is KVLVVDDSSF…ARNRDEAISL (118 aa). Asp55 is subject to 4-aspartylphosphate. Positions 202-394 constitute a CheB-type methylesterase domain; that stretch reads SGKKYQLMAI…AERILVEVGR (193 aa). Catalysis depends on residues Ser214, His241, and Asp337.

The protein belongs to the CheB family. In terms of processing, phosphorylated by CheA. Phosphorylation of the N-terminal regulatory domain activates the methylesterase activity.

It localises to the cytoplasm. The enzyme catalyses [protein]-L-glutamate 5-O-methyl ester + H2O = L-glutamyl-[protein] + methanol + H(+). It catalyses the reaction L-glutaminyl-[protein] + H2O = L-glutamyl-[protein] + NH4(+). Involved in chemotaxis. Part of a chemotaxis signal transduction system that modulates chemotaxis in response to various stimuli. Catalyzes the demethylation of specific methylglutamate residues introduced into the chemoreceptors (methyl-accepting chemotaxis proteins or MCP) by CheR. Also mediates the irreversible deamidation of specific glutamine residues to glutamic acid. This Photobacterium profundum (strain SS9) protein is Protein-glutamate methylesterase/protein-glutamine glutaminase 2.